Consider the following 583-residue polypeptide: Isocitrate dehydrogenase kinase/phosphatase (583 aa).

Residues 315 to 321 (APGIRGM) and Lys336 each bind ATP. The active site involves Asp371.

It belongs to the AceK family.

It is found in the cytoplasm. It catalyses the reaction L-seryl-[isocitrate dehydrogenase] + ATP = O-phospho-L-seryl-[isocitrate dehydrogenase] + ADP + H(+). In terms of biological role, bifunctional enzyme which can phosphorylate or dephosphorylate isocitrate dehydrogenase (IDH) on a specific serine residue. This is a regulatory mechanism which enables bacteria to bypass the Krebs cycle via the glyoxylate shunt in response to the source of carbon. When bacteria are grown on glucose, IDH is fully active and unphosphorylated, but when grown on acetate or ethanol, the activity of IDH declines drastically concomitant with its phosphorylation. The protein is Isocitrate dehydrogenase kinase/phosphatase of Salmonella paratyphi B (strain ATCC BAA-1250 / SPB7).